Reading from the N-terminus, the 317-residue chain is Ribosomal large subunit pseudouridine synthase D (317 aa).

The S4 RNA-binding domain maps to 15–89; the sequence is WRLDRALASL…IPLEIVFEDE (75 aa). The active site involves D141.

It belongs to the pseudouridine synthase RluA family.

It localises to the cytoplasm. It carries out the reaction uridine(1911/1915/1917) in 23S rRNA = pseudouridine(1911/1915/1917) in 23S rRNA. In terms of biological role, responsible for synthesis of pseudouridine from uracil at positions 1911, 1915 and 1917 in 23S ribosomal RNA. The sequence is that of Ribosomal large subunit pseudouridine synthase D from Zymomonas mobilis subsp. mobilis (strain ATCC 31821 / ZM4 / CP4).